Consider the following 408-residue polypeptide: Imidazolonepropionase (408 aa).

Positions 72 and 74 each coordinate Fe(3+). Zn(2+) contacts are provided by His-72 and His-74. Residues Arg-81, Tyr-144, and His-177 each coordinate 4-imidazolone-5-propanoate. Tyr-144 provides a ligand contact to N-formimidoyl-L-glutamate. His-242 lines the Fe(3+) pocket. His-242 contributes to the Zn(2+) binding site. Gln-245 serves as a coordination point for 4-imidazolone-5-propanoate. Fe(3+) is bound at residue Asp-317. Asp-317 serves as a coordination point for Zn(2+). Positions 319 and 321 each coordinate N-formimidoyl-L-glutamate. Thr-322 lines the 4-imidazolone-5-propanoate pocket.

It belongs to the metallo-dependent hydrolases superfamily. HutI family. Requires Zn(2+) as cofactor. Fe(3+) is required as a cofactor.

The protein localises to the cytoplasm. It catalyses the reaction 4-imidazolone-5-propanoate + H2O = N-formimidoyl-L-glutamate. It functions in the pathway amino-acid degradation; L-histidine degradation into L-glutamate; N-formimidoyl-L-glutamate from L-histidine: step 3/3. Catalyzes the hydrolytic cleavage of the carbon-nitrogen bond in imidazolone-5-propanoate to yield N-formimidoyl-L-glutamate. It is the third step in the universal histidine degradation pathway. This is Imidazolonepropionase from Aliivibrio fischeri (strain MJ11) (Vibrio fischeri).